The primary structure comprises 257 residues: Fimbrial assembly protein, serogroup E1 (257 aa).

The sequence is that of Fimbrial assembly protein, serogroup E1 (fimB) from Dichelobacter nodosus (Bacteroides nodosus).